The primary structure comprises 248 residues: Proteasome subunit alpha (248 aa).

Belongs to the peptidase T1A family. In terms of assembly, the 20S proteasome core is composed of 14 alpha and 14 beta subunits that assemble into four stacked heptameric rings, resulting in a barrel-shaped structure. The two inner rings, each composed of seven catalytic beta subunits, are sandwiched by two outer rings, each composed of seven alpha subunits. The catalytic chamber with the active sites is on the inside of the barrel. Has a gated structure, the ends of the cylinder being occluded by the N-termini of the alpha-subunits. Is capped by the proteasome-associated ATPase, ARC.

Its subcellular location is the cytoplasm. It functions in the pathway protein degradation; proteasomal Pup-dependent pathway. The formation of the proteasomal ATPase ARC-20S proteasome complex, likely via the docking of the C-termini of ARC into the intersubunit pockets in the alpha-rings, may trigger opening of the gate for substrate entry. Interconversion between the open-gate and close-gate conformations leads to a dynamic regulation of the 20S proteasome proteolysis activity. Functionally, component of the proteasome core, a large protease complex with broad specificity involved in protein degradation. This is Proteasome subunit alpha from Mycobacterium tuberculosis (strain ATCC 25177 / H37Ra).